The following is a 224-amino-acid chain: 7-cyano-7-deazaguanine synthase (224 aa).

11 to 21 (FSGGQDSTTCL) is an ATP binding site. Positions 190, 199, 202, and 205 each coordinate Zn(2+).

It belongs to the QueC family. Zn(2+) serves as cofactor.

It carries out the reaction 7-carboxy-7-deazaguanine + NH4(+) + ATP = 7-cyano-7-deazaguanine + ADP + phosphate + H2O + H(+). It participates in purine metabolism; 7-cyano-7-deazaguanine biosynthesis. In terms of biological role, catalyzes the ATP-dependent conversion of 7-carboxy-7-deazaguanine (CDG) to 7-cyano-7-deazaguanine (preQ(0)). The chain is 7-cyano-7-deazaguanine synthase from Parabacteroides distasonis (strain ATCC 8503 / DSM 20701 / CIP 104284 / JCM 5825 / NCTC 11152).